Here is a 131-residue protein sequence, read N- to C-terminus: Transcriptional activator protein (131 aa).

The short motif at lysine 13–arginine 28 is the Nuclear localization signal element. Residues cysteine 33 to histidine 52 fold into a zinc finger. Positions aspartate 78–glutamate 131 are disordered. The transactivation stretch occupies residues serine 117–glutamate 131.

It belongs to the geminiviridae transcriptional activator protein family. Monomer. Homodimer. Homooligomer. Self-interaction correlates with nuclear localization and efficient activation of transcription. Monomers suppress local silencing by interacting with and inactivating host adenosine kinase 2 (ADK2) in the cytoplasm. Interacts with and inhibits host SNF1 kinase. Binds to ssDNA. Post-translationally, phosphorylated.

It is found in the host nucleus. The protein localises to the host cytoplasm. Strong activator of the late viral genes promoters. Enhances the expression of the capsid protein and nuclear shuttle protein. Acts as a suppressor of RNA-mediated gene silencing, also known as post-transcriptional gene silencing (PTGS), a mechanism of plant viral defense that limits the accumulation of viral RNAs. Suppresses the host RNA silencing by inhibiting adenosine kinase 2 (ADK2), a kinase involved in a general methylation pathway. Also suppresses the host basal defense by interacting with and inhibiting SNF1 kinase, a key regulator of cell metabolism implicated in innate antiviral defense. Determines pathogenicity. The polypeptide is Transcriptional activator protein (Cucurbita moschata (Winter crookneck squash)).